The chain runs to 67 residues: Retron Se72 cold shock-like protein (67 aa).

The region spanning 1–66 (MENGFVNFYD…KGFKAVAIQK (66 aa)) is the CSD domain.

Probable cold shock-like component of antiviral defense system retron Se72, composed of a non-coding RNA (ncRNA), a reverse transcriptase (RT) and this protein. Expression of retron Se72 confers protection against bacteriophage lambda. At multiplicity of infection (MOI) of 0.02 cultures slow growth when infected with lambda but do not collapse, at MOI 2 cultures enter growth stasis. The protein is Retron Se72 cold shock-like protein of Salmonella heidelberg (strain 579083-10).